A 154-amino-acid polypeptide reads, in one-letter code: MPIKKILLLNGPNLNLLGTREPHIYGYDTLASIESSLSTYLSSLTPSVELLTFQSNWEGALIDRIHEARTDGTDAIVINPAAFTHYSVALRDALTGVDIPFVEVHISNVHKREEFRHKSFLSDKAEAVICGLGVFGYRAAVEWCVGYLKERPKL.

Tyr25 serves as the catalytic Proton acceptor. Substrate is bound by residues Asn79, His85, and Asp92. Catalysis depends on His105, which acts as the Proton donor. Residues 106-107 (IS) and Arg116 each bind substrate.

Belongs to the type-II 3-dehydroquinase family. In terms of assembly, homododecamer. Adopts a ring-like structure, composed of an arrangement of two hexameric rings stacked on top of one another.

The catalysed reaction is 3-dehydroquinate = 3-dehydroshikimate + H2O. It participates in aromatic compound metabolism; 3,4-dihydroxybenzoate biosynthesis; 3,4-dihydroxybenzoate from 3-dehydroquinate: step 1/2. In terms of biological role, is involved in the catabolism of quinate. Allows the utilization of quinate as carbon source via the beta-ketoadipate pathway. The protein is Catabolic 3-dehydroquinase of Sclerotinia sclerotiorum (strain ATCC 18683 / 1980 / Ss-1) (White mold).